The sequence spans 763 residues: Phosphoglycerol transferase I (763 aa).

Helical transmembrane passes span 1–21 (MSEL…AWKA), 26–46 (WWFA…ITLY), 77–97 (ILPG…LGWV), and 108–128 (VGYS…SPAF).

This sequence belongs to the OpgB family.

The protein localises to the cell inner membrane. The catalysed reaction is a phosphatidylglycerol + a membrane-derived-oligosaccharide D-glucose = a 1,2-diacyl-sn-glycerol + a membrane-derived-oligosaccharide 6-(glycerophospho)-D-glucose.. The protein operates within glycan metabolism; osmoregulated periplasmic glucan (OPG) biosynthesis. In terms of biological role, transfers a phosphoglycerol residue from phosphatidylglycerol to the membrane-bound nascent glucan backbones. The sequence is that of Phosphoglycerol transferase I from Salmonella heidelberg (strain SL476).